The chain runs to 543 residues: Chaperonin GroEL (543 aa).

ATP-binding positions include 29 to 32 (TLGP), K50, 86 to 90 (DGTTT), G415, and D495.

This sequence belongs to the chaperonin (HSP60) family. As to quaternary structure, forms a cylinder of 14 subunits composed of two heptameric rings stacked back-to-back. Interacts with the co-chaperonin GroES.

The protein resides in the cytoplasm. The catalysed reaction is ATP + H2O + a folded polypeptide = ADP + phosphate + an unfolded polypeptide.. Its function is as follows. Together with its co-chaperonin GroES, plays an essential role in assisting protein folding. The GroEL-GroES system forms a nano-cage that allows encapsulation of the non-native substrate proteins and provides a physical environment optimized to promote and accelerate protein folding. This chain is Chaperonin GroEL, found in Karelsulcia muelleri (strain GWSS) (Sulcia muelleri).